The primary structure comprises 353 residues: MTIALGKSSKEEQTLFDIMDDWLRRDRFVFVGWSGLLLFPCAYFALGGWFTGTTFVTSWYTHGLASSYLEGCNFLTAAVSTPANSLAHSLLLLWGPEAQGDFTRWCQLGGLWAFVALHGAFGLIGFMLRQFELARSVQLRPYNAIAFSAPIAVFVSVFLIYPLGQSGWFFAPSFGVAAIFRFILFFQGFHNWTLNPFHMMGVAGVLGAALLCAIHGATVENTLFEDGDGANTFRAFNPTQAEETYSMVTANRFWSQIFGVAFSNKRWLHFFMLFVPVTGLWMSAIGVVGLALNLRAYDFVSQEIRAAEDPEFETFYTKNILLNEGIRAWMAAQDQPHENLIFPEEVLPRGNAL.

T2 is modified (N-acetylthreonine). T2 carries the phosphothreonine modification. The helical transmembrane segment at C41 to T61 threads the bilayer. H118 lines the chlorophyll a pocket. The helical transmembrane segment at G125–P141 threads the bilayer. The pheophytin a site is built by Q130 and N143. A helical membrane pass occupies residues V153–S166. H198 contributes to the chlorophyll a binding site. A helical transmembrane segment spans residues A208–D228. A plastoquinone-binding residues include H215 and F262. Position 215 (H215) interacts with Fe cation. Position 269 (H269) interacts with Fe cation. Residues G279–R295 traverse the membrane as a helical segment.

It belongs to the reaction center PufL/M/PsbA/D family. PSII is composed of 1 copy each of membrane proteins PsbA, PsbB, PsbC, PsbD, PsbE, PsbF, PsbH, PsbI, PsbJ, PsbK, PsbL, PsbM, PsbT, PsbX, PsbY, PsbZ, Psb30/Ycf12, at least 3 peripheral proteins of the oxygen-evolving complex and a large number of cofactors. It forms dimeric complexes. The D1/D2 heterodimer binds P680, chlorophylls that are the primary electron donor of PSII, and subsequent electron acceptors. It shares a non-heme iron and each subunit binds pheophytin, quinone, additional chlorophylls, carotenoids and lipids. There is also a Cl(-1) ion associated with D1 and D2, which is required for oxygen evolution. The PSII complex binds additional chlorophylls, carotenoids and specific lipids. serves as cofactor.

It localises to the plastid. It is found in the chloroplast thylakoid membrane. It carries out the reaction 2 a plastoquinone + 4 hnu + 2 H2O = 2 a plastoquinol + O2. In terms of biological role, photosystem II (PSII) is a light-driven water:plastoquinone oxidoreductase that uses light energy to abstract electrons from H(2)O, generating O(2) and a proton gradient subsequently used for ATP formation. It consists of a core antenna complex that captures photons, and an electron transfer chain that converts photonic excitation into a charge separation. The D1/D2 (PsbA/PsbD) reaction center heterodimer binds P680, the primary electron donor of PSII as well as several subsequent electron acceptors. D2 is needed for assembly of a stable PSII complex. This chain is Photosystem II D2 protein, found in Cryptomeria japonica (Japanese cedar).